Here is a 205-residue protein sequence, read N- to C-terminus: Ras-related protein Rab-18-B (205 aa).

Residues S17, G20, K21, S22, S23, D34, P35, T40, G66, K123, D125, and A152 each contribute to the GTP site. A Mg(2+)-binding site is contributed by S22. 2 consecutive short sequence motifs (switch) follow at residues 31-45 and 63-80; these read DTFD…GVDF and DTAG…YYRG. T40 serves as a coordination point for Mg(2+). Residue C198 is the site of S-palmitoyl cysteine attachment. C202 carries the post-translational modification Cysteine methyl ester. A lipid anchor (S-geranylgeranyl cysteine) is attached at C202. Positions 203–205 are cleaved as a propeptide — removed in mature form; sequence SLV.

The protein belongs to the small GTPase superfamily. Rab family. Mg(2+) is required as a cofactor.

The protein resides in the endoplasmic reticulum membrane. Its subcellular location is the golgi apparatus. The protein localises to the cis-Golgi network membrane. It is found in the lipid droplet. It localises to the apical cell membrane. It catalyses the reaction GTP + H2O = GDP + phosphate + H(+). Its activity is regulated as follows. Regulated by guanine nucleotide exchange factors (GEFs) which promote the exchange of bound GDP for free GTP. Regulated by GTPase activating proteins (GAPs) which increase the GTP hydrolysis activity at the ER membrane. Inhibited by GDP dissociation inhibitors (GDIs) which prevent Rab-GDP dissociation. Functionally, the small GTPases Rab are key regulators of intracellular membrane trafficking, from the formation of transport vesicles to their fusion with membranes. Rabs cycle between an inactive GDP-bound form and an active GTP-bound form that is able to recruit to membranes different sets of downstream effectors directly responsible for vesicle formation, movement, tethering and fusion. Required for the localization of ZFYVE1 to lipid droplets and for its function in mediating the formation of endoplasmic reticulum-lipid droplets (ER-LD) contacts. Also required for maintaining endoplasmic reticulum structure. Plays a role in apical endocytosis/recycling. Plays a key role in eye and brain development and neurodegeneration. In Danio rerio (Zebrafish), this protein is Ras-related protein Rab-18-B (rab18b).